A 95-amino-acid chain; its full sequence is Pyrimidine/purine nucleoside phosphorylase (95 aa).

This sequence belongs to the nucleoside phosphorylase PpnP family.

It catalyses the reaction a purine D-ribonucleoside + phosphate = a purine nucleobase + alpha-D-ribose 1-phosphate. The catalysed reaction is adenosine + phosphate = alpha-D-ribose 1-phosphate + adenine. The enzyme catalyses cytidine + phosphate = cytosine + alpha-D-ribose 1-phosphate. It carries out the reaction guanosine + phosphate = alpha-D-ribose 1-phosphate + guanine. It catalyses the reaction inosine + phosphate = alpha-D-ribose 1-phosphate + hypoxanthine. The catalysed reaction is thymidine + phosphate = 2-deoxy-alpha-D-ribose 1-phosphate + thymine. The enzyme catalyses uridine + phosphate = alpha-D-ribose 1-phosphate + uracil. It carries out the reaction xanthosine + phosphate = alpha-D-ribose 1-phosphate + xanthine. Catalyzes the phosphorolysis of diverse nucleosides, yielding D-ribose 1-phosphate and the respective free bases. Can use uridine, adenosine, guanosine, cytidine, thymidine, inosine and xanthosine as substrates. Also catalyzes the reverse reactions. The polypeptide is Pyrimidine/purine nucleoside phosphorylase (Vibrio cholerae serotype O1 (strain ATCC 39315 / El Tor Inaba N16961)).